A 200-amino-acid chain; its full sequence is Probable nicotinate-nucleotide adenylyltransferase (200 aa).

The protein belongs to the NadD family.

The catalysed reaction is nicotinate beta-D-ribonucleotide + ATP + H(+) = deamido-NAD(+) + diphosphate. It functions in the pathway cofactor biosynthesis; NAD(+) biosynthesis; deamido-NAD(+) from nicotinate D-ribonucleotide: step 1/1. In terms of biological role, catalyzes the reversible adenylation of nicotinate mononucleotide (NaMN) to nicotinic acid adenine dinucleotide (NaAD). This Clavibacter sepedonicus (Clavibacter michiganensis subsp. sepedonicus) protein is Probable nicotinate-nucleotide adenylyltransferase.